The following is a 465-amino-acid chain: Gamma-aminobutyric acid receptor subunit alpha-6 (465 aa).

The N-terminal stretch at Met1–Gly19 is a signal peptide. Topologically, residues Gly20–Phe243 are extracellular. Asn31 carries an N-linked (GlcNAc...) asparagine glycan. 4-aminobutanoate is bound at residue Arg84. Asn128 and Asn141 each carry an N-linked (GlcNAc...) asparagine glycan. 4-aminobutanoate is bound at residue Thr147. Cys156 and Cys170 are disulfide-bonded. The helical transmembrane segment at Met244–Ile264 threads the bilayer. The Cytoplasmic portion of the chain corresponds to Asn265 to Pro270. Residues Ala271–Ala290 traverse the membrane as a helical segment. Residues Arg291–Asp304 lie on the Extracellular side of the membrane. The chain crosses the membrane as a helical span at residues Trp305 to Asn325. Residues Tyr326–Arg424 are Cytoplasmic-facing. The tract at residues Asn392 to Gly415 is disordered. Pro residues predominate over residues Ser401–Val413. A helical membrane pass occupies residues Ile425–Lys445. The Extracellular segment spans residues Asp446–Asn465.

It belongs to the ligand-gated ion channel (TC 1.A.9) family. Gamma-aminobutyric acid receptor (TC 1.A.9.5) subfamily. GABRA6 sub-subfamily. As to quaternary structure, heteropentamer, formed by a combination of alpha (GABRA1-6), beta (GABRB1-3), gamma (GABRG1-3), delta (GABRD), epsilon (GABRE), rho (GABRR1-3), pi (GABRP) and theta (GABRQ) chains, each subunit exhibiting distinct physiological and pharmacological properties. As to expression, expressed in brain, in cerebellar granule cells.

It localises to the postsynaptic cell membrane. The protein resides in the cell membrane. The catalysed reaction is chloride(in) = chloride(out). In terms of biological role, alpha subunit of the heteropentameric ligand-gated chloride channel gated by gamma-aminobutyric acid (GABA), a major inhibitory neurotransmitter in the brain. GABA-gated chloride channels, also named GABA(A) receptors (GABAAR), consist of five subunits arranged around a central pore and contain GABA active binding site(s) located at the alpha and beta subunit interface(s). When activated by GABA, GABAARs selectively allow the flow of chloride anions across the cell membrane down their electrochemical gradient. This Gallus gallus (Chicken) protein is Gamma-aminobutyric acid receptor subunit alpha-6 (GABRA6).